A 246-amino-acid polypeptide reads, in one-letter code: tRNA pseudouridine synthase A (246 aa).

Aspartate 52 functions as the Nucleophile in the catalytic mechanism. Substrate is bound at residue tyrosine 111.

Belongs to the tRNA pseudouridine synthase TruA family. As to quaternary structure, homodimer.

It catalyses the reaction uridine(38/39/40) in tRNA = pseudouridine(38/39/40) in tRNA. Formation of pseudouridine at positions 38, 39 and 40 in the anticodon stem and loop of transfer RNAs. This chain is tRNA pseudouridine synthase A, found in Rhodopseudomonas palustris (strain BisA53).